The following is a 413-amino-acid chain: Glucose-1-phosphate adenylyltransferase (413 aa).

Alpha-D-glucose 1-phosphate contacts are provided by residues Gly163, 179–180 (EK), and Ser197.

It belongs to the bacterial/plant glucose-1-phosphate adenylyltransferase family. Homotetramer.

The catalysed reaction is alpha-D-glucose 1-phosphate + ATP + H(+) = ADP-alpha-D-glucose + diphosphate. Its pathway is glycan biosynthesis; glycogen biosynthesis. Its function is as follows. Involved in the biosynthesis of ADP-glucose, a building block required for the elongation reactions to produce glycogen. Catalyzes the reaction between ATP and alpha-D-glucose 1-phosphate (G1P) to produce pyrophosphate and ADP-Glc. The sequence is that of Glucose-1-phosphate adenylyltransferase from Parafrankia sp. (strain EAN1pec).